Consider the following 318-residue polypeptide: Elongation factor Ts, mitochondrial (318 aa).

A mitochondrion-targeting transit peptide spans 1–18 (MLLQRFFTRALHSTRQLY).

Belongs to the EF-Ts family.

It is found in the mitochondrion. Its function is as follows. Associates with the EF-Tu.GDP complex and induces the exchange of GDP to GTP. It remains bound to the aminoacyl-tRNA.EF-Tu.GTP complex up to the GTP hydrolysis stage on the ribosome. This Drosophila melanogaster (Fruit fly) protein is Elongation factor Ts, mitochondrial.